The sequence spans 156 residues: MPRKGHTQKRDVLADPIYNNKVVTKLINNIMLDGKRGVAQKIVYGAFDRVAAKTERPAIEVFEEAMNNIMPVLEVKARRIGGATYQVPIEVKPDRRQALALRWMTTFSRARGEKTMEERLANEILDAANNTGASVKRKEDMHKMAEANKAFAHYRF.

Belongs to the universal ribosomal protein uS7 family. Part of the 30S ribosomal subunit. Contacts proteins S9 and S11.

One of the primary rRNA binding proteins, it binds directly to 16S rRNA where it nucleates assembly of the head domain of the 30S subunit. Is located at the subunit interface close to the decoding center, probably blocks exit of the E-site tRNA. This Lachnospira eligens (strain ATCC 27750 / DSM 3376 / VPI C15-48 / C15-B4) (Eubacterium eligens) protein is Small ribosomal subunit protein uS7.